Reading from the N-terminus, the 261-residue chain is Ribosomal RNA small subunit methyltransferase J (261 aa).

S-adenosyl-L-methionine is bound by residues 111–112 (RD), 127–128 (ER), 163–164 (SS), and aspartate 181.

The protein belongs to the methyltransferase superfamily. RsmJ family.

Its subcellular location is the cytoplasm. The catalysed reaction is guanosine(1516) in 16S rRNA + S-adenosyl-L-methionine = N(2)-methylguanosine(1516) in 16S rRNA + S-adenosyl-L-homocysteine + H(+). Specifically methylates the guanosine in position 1516 of 16S rRNA. The protein is Ribosomal RNA small subunit methyltransferase J of Shewanella sp. (strain ANA-3).